A 187-amino-acid polypeptide reads, in one-letter code: Peptide methionine sulfoxide reductase A2-1 (187 aa).

The protein belongs to the MsrA Met sulfoxide reductase family.

The protein resides in the cytoplasm. The protein localises to the cytosol. It catalyses the reaction L-methionyl-[protein] + [thioredoxin]-disulfide + H2O = L-methionyl-(S)-S-oxide-[protein] + [thioredoxin]-dithiol. The enzyme catalyses [thioredoxin]-disulfide + L-methionine + H2O = L-methionine (S)-S-oxide + [thioredoxin]-dithiol. Functionally, catalyzes the reduction of methionine sulfoxide (MetSO) to methionine in proteins. Plays a protective role against oxidative stress by restoring activity to proteins that have been inactivated by methionine oxidation. MSRA family specifically reduces the MetSO S-enantiomer. In Oryza sativa subsp. japonica (Rice), this protein is Peptide methionine sulfoxide reductase A2-1 (MSRA2-1).